The following is a 309-amino-acid chain: Epidermal retinol dehydrogenase 2 (309 aa).

A helical transmembrane segment spans residues 11 to 31 (LLVFLGKSLLSVLEALLFHVI). Residue 44 to 68 (LITGAGSGLGRLLALQFARLGAVLV) participates in NADP(+) binding. Position 177 (Ser-177) interacts with substrate. Tyr-190 functions as the Proton acceptor in the catalytic mechanism. The helical transmembrane segment at 270–290 (FLYFIVFLKSILPIKTGILIA) threads the bilayer.

The protein belongs to the short-chain dehydrogenases/reductases (SDR) family.

The protein resides in the endoplasmic reticulum membrane. The catalysed reaction is all-trans-retinol--[retinol-binding protein] + NAD(+) = all-trans-retinal--[retinol-binding protein] + NADH + H(+). Its pathway is cofactor metabolism; retinol metabolism. In terms of biological role, oxidoreductase with strong preference for NAD. Active in both the oxidative and reductive directions. Oxidizes all-trans-retinol in all-trans-retinaldehyde. No activity was detected with 11-cis-retinol or 11-cis-retinaldehyde as substrates with either NAD(+)/NADH or NADP(+)/NADPH. The polypeptide is Epidermal retinol dehydrogenase 2 (Mus musculus (Mouse)).